A 270-amino-acid polypeptide reads, in one-letter code: Multi-heme protein MamP (270 aa).

Residues 1–6 lie on the Cytoplasmic side of the membrane; the sequence is MNSKLV. Residues 7-20 are membrane-embedded; that stretch reads LLVVGVVFALVLVI. Residues 21–270 lie on the Lumenal side of the membrane; it reads GRQGGVVAPQ…GPCEACHVIN (250 aa). Residues 84–201 form a PDZ region; sequence NLKVFEGHWQ…GGLGFAQLEG (118 aa). The short motif at 205–225 is the MCR (magnetochrome) 1 element; that stretch reads ILPGDPRPHGYRGACTDCHPV. Residues Cys219, Cys222, His223, Cys263, Cys266, and His267 each coordinate heme. Residues 245-269 carry the MCR 2 motif; the sequence is ITRDAVTRGVSPHEVRGPCEACHVI.

This sequence belongs to the magnetosome MamP family. Homodimer. Heme is required as a cofactor. In terms of processing, subject to proteolytic cleavage which requires both MamE and MamO.

The protein resides in the cell inner membrane. In terms of biological role, involved in redox-control of magnetite formation. Oxidizes Fe(2+) at alkaline pH; successively forms ferrihydrite (Fe(3+)(2)O(3) 0.5 H(2)O) then magnetite (Fe(3)O(4)) from an Fe(2+) solution. This is Multi-heme protein MamP from Magnetospirillum gryphiswaldense (strain DSM 6361 / JCM 21280 / NBRC 15271 / MSR-1).